Consider the following 406-residue polypeptide: Argininosuccinate synthase (406 aa).

ATP contacts are provided by residues 10-18 (AYSGGLDTS) and Ala-37. 2 residues coordinate L-citrulline: Tyr-88 and Ser-93. Residue Gly-118 coordinates ATP. L-aspartate contacts are provided by Thr-120, Asn-124, and Asp-125. Asn-124 lines the L-citrulline pocket. The L-citrulline site is built by Arg-128, Ser-179, Ser-188, Glu-264, and Tyr-276.

This sequence belongs to the argininosuccinate synthase family. Type 1 subfamily. As to quaternary structure, homotetramer.

It localises to the cytoplasm. It carries out the reaction L-citrulline + L-aspartate + ATP = 2-(N(omega)-L-arginino)succinate + AMP + diphosphate + H(+). Its pathway is amino-acid biosynthesis; L-arginine biosynthesis; L-arginine from L-ornithine and carbamoyl phosphate: step 2/3. The sequence is that of Argininosuccinate synthase from Azotobacter vinelandii (strain DJ / ATCC BAA-1303).